The chain runs to 204 residues: RNA-free ribonuclease P (204 aa).

The protein belongs to the HARP family.

It catalyses the reaction Endonucleolytic cleavage of RNA, removing 5'-extranucleotides from tRNA precursor.. Functionally, RNA-free RNase P that catalyzes the removal of the 5'-leader sequence from pre-tRNA to produce the mature 5'-terminus. This Pyrococcus horikoshii (strain ATCC 700860 / DSM 12428 / JCM 9974 / NBRC 100139 / OT-3) protein is RNA-free ribonuclease P.